Reading from the N-terminus, the 431-residue chain is Argininosuccinate lyase (431 aa).

This sequence belongs to the lyase 1 family. Argininosuccinate lyase subfamily.

It localises to the cytoplasm. It catalyses the reaction 2-(N(omega)-L-arginino)succinate = fumarate + L-arginine. The protein operates within amino-acid biosynthesis; L-arginine biosynthesis; L-arginine from L-ornithine and carbamoyl phosphate: step 3/3. The sequence is that of Argininosuccinate lyase from Xanthomonas campestris pv. campestris (strain B100).